The primary structure comprises 150 residues: Large ribosomal subunit protein bL9 (150 aa).

It belongs to the bacterial ribosomal protein bL9 family.

Its function is as follows. Binds to the 23S rRNA. This chain is Large ribosomal subunit protein bL9, found in Shewanella halifaxensis (strain HAW-EB4).